A 207-amino-acid polypeptide reads, in one-letter code: Large ribosomal subunit protein bL25 (207 aa).

The segment at 186–207 (SKPRGGAGAEGEADAEGEAAAE) is disordered. The span at 196-207 (GEADAEGEAAAE) shows a compositional bias: acidic residues.

Belongs to the bacterial ribosomal protein bL25 family. CTC subfamily. As to quaternary structure, part of the 50S ribosomal subunit; part of the 5S rRNA/L5/L18/L25 subcomplex. Contacts the 5S rRNA. Binds to the 5S rRNA independently of L5 and L18.

Functionally, this is one of the proteins that binds to the 5S RNA in the ribosome where it forms part of the central protuberance. The chain is Large ribosomal subunit protein bL25 from Methylobacillus flagellatus (strain ATCC 51484 / DSM 6875 / VKM B-1610 / KT).